Consider the following 270-residue polypeptide: Acyl-[acyl-carrier-protein]--UDP-N-acetylglucosamine O-acyltransferase (270 aa).

This sequence belongs to the transferase hexapeptide repeat family. LpxA subfamily. Homotrimer.

It localises to the cytoplasm. It catalyses the reaction a (3R)-hydroxyacyl-[ACP] + UDP-N-acetyl-alpha-D-glucosamine = a UDP-3-O-[(3R)-3-hydroxyacyl]-N-acetyl-alpha-D-glucosamine + holo-[ACP]. It functions in the pathway glycolipid biosynthesis; lipid IV(A) biosynthesis; lipid IV(A) from (3R)-3-hydroxytetradecanoyl-[acyl-carrier-protein] and UDP-N-acetyl-alpha-D-glucosamine: step 1/6. Its function is as follows. Involved in the biosynthesis of lipid A, a phosphorylated glycolipid that anchors the lipopolysaccharide to the outer membrane of the cell. This chain is Acyl-[acyl-carrier-protein]--UDP-N-acetylglucosamine O-acyltransferase, found in Sinorhizobium medicae (strain WSM419) (Ensifer medicae).